Reading from the N-terminus, the 367-residue chain is Putative F-box protein At4g10190 (367 aa).

Positions 3–53 constitute an F-box domain; sequence KRNIVDLPEDLVMEILARVPTVTLVRLQSTSKRWNVLIEDKRFAEQHFTNA.

This Arabidopsis thaliana (Mouse-ear cress) protein is Putative F-box protein At4g10190.